Reading from the N-terminus, the 373-residue chain is CCA-adding enzyme (373 aa).

ATP is bound by residues glycine 8 and arginine 11. Glycine 8 and arginine 11 together coordinate CTP. Aspartate 21 and aspartate 23 together coordinate Mg(2+). Residues arginine 91, arginine 137, and arginine 140 each coordinate ATP. Positions 91, 137, and 140 each coordinate CTP.

Belongs to the tRNA nucleotidyltransferase/poly(A) polymerase family. Bacterial CCA-adding enzyme type 2 subfamily. Requires Mg(2+) as cofactor.

The enzyme catalyses a tRNA precursor + 2 CTP + ATP = a tRNA with a 3' CCA end + 3 diphosphate. It carries out the reaction a tRNA with a 3' CCA end + 2 CTP + ATP = a tRNA with a 3' CCACCA end + 3 diphosphate. Catalyzes the addition and repair of the essential 3'-terminal CCA sequence in tRNAs without using a nucleic acid template. Adds these three nucleotides in the order of C, C, and A to the tRNA nucleotide-73, using CTP and ATP as substrates and producing inorganic pyrophosphate. tRNA 3'-terminal CCA addition is required both for tRNA processing and repair. Also involved in tRNA surveillance by mediating tandem CCA addition to generate a CCACCA at the 3' terminus of unstable tRNAs. While stable tRNAs receive only 3'-terminal CCA, unstable tRNAs are marked with CCACCA and rapidly degraded. The chain is CCA-adding enzyme from Marinobacter nauticus (strain ATCC 700491 / DSM 11845 / VT8) (Marinobacter aquaeolei).